The sequence spans 293 residues: Lymphocyte antigen 6 complex locus protein G6f (293 aa).

The first 19 residues, 1 to 19 (MAMVVFLLLYLCGHPQAAA), serve as a signal peptide directing secretion. One can recognise an Ig-like V-type domain in the interval 20-124 (DNIQTLYVPS…HKYQNWRVYD (105 aa)). At 20–237 (DNIQTLYVPS…APLPSWDVSW (218 aa)) the chain is on the extracellular side. A disulfide bridge connects residues C37 and C108. N90 carries N-linked (GlcNAc...) asparagine glycosylation. A helical transmembrane segment spans residues 238–258 (ILMLLFAAGQGVTIIALSIVI). The Cytoplasmic segment spans residues 259–293 (WRHQRAQGTQDREPSIPHFKPEVQVYENIHLARLR). Position 284 is a phosphotyrosine (Y284).

Homodimer; disulfide-linked. Interacts with GRB2 and GRB7 in a phosphorylation-dependent manner. N-glycosylated.

The protein localises to the cell membrane. Functionally, may play a role in the downstream signal transduction pathways involving GRB2 and GRB7. This is Lymphocyte antigen 6 complex locus protein G6f (Ly6g6f) from Rattus norvegicus (Rat).